A 324-amino-acid chain; its full sequence is Lipoyl synthase (324 aa).

Positions 72, 77, 83, 98, 102, 105, and 313 each coordinate [4Fe-4S] cluster. Residues 84–302 enclose the Radical SAM core domain; it reads FRFGTASFMI…AQEGKKMGFL (219 aa).

This sequence belongs to the radical SAM superfamily. Lipoyl synthase family. Requires [4Fe-4S] cluster as cofactor.

Its subcellular location is the cytoplasm. It catalyses the reaction [[Fe-S] cluster scaffold protein carrying a second [4Fe-4S](2+) cluster] + N(6)-octanoyl-L-lysyl-[protein] + 2 oxidized [2Fe-2S]-[ferredoxin] + 2 S-adenosyl-L-methionine + 4 H(+) = [[Fe-S] cluster scaffold protein] + N(6)-[(R)-dihydrolipoyl]-L-lysyl-[protein] + 4 Fe(3+) + 2 hydrogen sulfide + 2 5'-deoxyadenosine + 2 L-methionine + 2 reduced [2Fe-2S]-[ferredoxin]. It functions in the pathway protein modification; protein lipoylation via endogenous pathway; protein N(6)-(lipoyl)lysine from octanoyl-[acyl-carrier-protein]: step 2/2. Its function is as follows. Catalyzes the radical-mediated insertion of two sulfur atoms into the C-6 and C-8 positions of the octanoyl moiety bound to the lipoyl domains of lipoate-dependent enzymes, thereby converting the octanoylated domains into lipoylated derivatives. This chain is Lipoyl synthase, found in Dichelobacter nodosus (strain VCS1703A).